We begin with the raw amino-acid sequence, 173 residues long: Co-chaperone protein HscB homolog (173 aa).

Positions 5–77 (CHFALFELQP…PKRARYLLAM (73 aa)) constitute a J domain.

Belongs to the HscB family. Interacts with HscA and stimulates its ATPase activity.

Its function is as follows. Co-chaperone involved in the maturation of iron-sulfur cluster-containing proteins. Seems to help targeting proteins to be folded toward HscA. The protein is Co-chaperone protein HscB homolog of Pseudomonas fluorescens (strain SBW25).